The following is a 358-amino-acid chain: tRNA-specific 2-thiouridylase MnmA (358 aa).

ATP is bound by residues 7–14 and Leu-33; that span reads AMSGGVDS. Catalysis depends on Cys-101, which acts as the Nucleophile. The cysteines at positions 101 and 197 are disulfide-linked. An ATP-binding site is contributed by Gly-125. Positions 147 to 149 are interaction with tRNA; it reads KDQ. Catalysis depends on Cys-197, which acts as the Cysteine persulfide intermediate.

Belongs to the MnmA/TRMU family.

The protein resides in the cytoplasm. The catalysed reaction is S-sulfanyl-L-cysteinyl-[protein] + uridine(34) in tRNA + AH2 + ATP = 2-thiouridine(34) in tRNA + L-cysteinyl-[protein] + A + AMP + diphosphate + H(+). Functionally, catalyzes the 2-thiolation of uridine at the wobble position (U34) of tRNA, leading to the formation of s(2)U34. In Rickettsia prowazekii (strain Madrid E), this protein is tRNA-specific 2-thiouridylase MnmA.